The sequence spans 194 residues: Probable RNA 2'-phosphotransferase (194 aa).

The protein belongs to the KptA/TPT1 family.

Removes the 2'-phosphate from RNA via an intermediate in which the phosphate is ADP-ribosylated by NAD followed by a presumed transesterification to release the RNA and generate ADP-ribose 1''-2''-cyclic phosphate (APPR&gt;P). May function as an ADP-ribosylase. In Burkholderia lata (strain ATCC 17760 / DSM 23089 / LMG 22485 / NCIMB 9086 / R18194 / 383), this protein is Probable RNA 2'-phosphotransferase.